We begin with the raw amino-acid sequence, 53 residues long: Small polypeptide DEVIL 7 (53 aa).

Residues 1–16 show a composition bias toward basic and acidic residues; the sequence is MREKYTKEEAVKNWEK. Residues 1-28 are disordered; it reads MREKYTKEEAVKNWEKKKNKPSSPKGVG. Residues 22–53 form a required for DVL/RTFL small polypeptide activity region; sequence SSPKGVGEFLKKKKGRFYIIGKCITMLLCSHK. Residues 30–46 traverse the membrane as a helical segment; that stretch reads FLKKKKGRFYIIGKCIT.

Belongs to the DVL/RTFL small polypeptides family.

The protein localises to the cell membrane. Small polypeptide acting as a regulatory molecule which coordinates cellular responses required for differentiation, growth and development, probably by restricting polar cell proliferation in lateral organs and coordinating socket cell recruitment and differentiation at trichome sites. The polypeptide is Small polypeptide DEVIL 7 (Arabidopsis thaliana (Mouse-ear cress)).